The chain runs to 318 residues: Galactofuranose-binding protein YtfQ (318 aa).

The N-terminal stretch at 1–21 (MWKRLLIVSAVSAAMSSMALA) is a signal peptide. Beta-D-galactofuranose-binding positions include 34 to 38 (ESGWR), 111 to 112 (DR), R167, N220, and D248. C150 and C214 are oxidised to a cystine.

This sequence belongs to the bacterial solute-binding protein 2 family. The complex is composed of two ATP-binding proteins (YtfR), two transmembrane proteins (YtfT and YjfF) and a solute-binding protein (YtfQ).

The protein localises to the periplasm. Functionally, part of the ABC transporter complex YtfQRT-YjfF involved in galactofuranose transport. Binds to both alpha- and beta-galactofuranose. The sequence is that of Galactofuranose-binding protein YtfQ (ytfQ) from Escherichia coli (strain K12).